The following is a 190-amino-acid chain: Ferric nitrobindin-like protein (190 aa).

Residues 20-26 carry the GXWXGXG motif; that stretch reads GNWAGAG.

Belongs to the nitrobindin family.

The sequence is that of Ferric nitrobindin-like protein from Streptomyces griseus subsp. griseus (strain JCM 4626 / CBS 651.72 / NBRC 13350 / KCC S-0626 / ISP 5235).